The following is a 148-amino-acid chain: UPF0756 membrane protein NMCC_1816 (148 aa).

4 helical membrane-spanning segments follow: residues 13 to 35 (LILL…LLLM), 50 to 70 (HGLN…LVSG), 80 to 100 (FLNF…WLAG), and 121 to 141 (VIGV…AGIL).

Belongs to the UPF0756 family.

The protein localises to the cell membrane. In Neisseria meningitidis serogroup C (strain 053442), this protein is UPF0756 membrane protein NMCC_1816.